The following is a 217-amino-acid chain: HTH-type transcriptional regulator EthR (217 aa).

Positions 1-22 (MTTASQTRTPRGRRSARPSGDD) are disordered. One can recognise an HTH tetR-type domain in the interval 21-81 (DDREAAILAT…SLIDPLIKRA (61 aa)). Residues 44–63 (SVDDLAKGAGISRPTFYFYF) constitute a DNA-binding region (H-T-H motif).

Homodimer.

Its function is as follows. Involved in the repression of teh monooxygenase EthA which is responsible of the formation of the active metabolite of ethionamide (ETH). The chain is HTH-type transcriptional regulator EthR (ethR) from Mycolicibacterium smegmatis (strain ATCC 700084 / mc(2)155) (Mycobacterium smegmatis).